We begin with the raw amino-acid sequence, 1147 residues long: Myosin heavy chain IB (1147 aa).

In terms of domain architecture, Myosin motor spans 9-677 (RGVDDLVLMP…TLFHLEECLD (669 aa)). An ATP-binding site is contributed by 103 to 110 (GESGAGKT). The residue at position 315 (S315) is a Phosphoserine. Residues 551-573 (CDALMEALSRCSPHYIRCIKPND) are actin-binding. One can recognise a TH1 domain in the interval 715–900 (KERQRHSVNR…RANIQIGIAT (186 aa)). Disordered stretches follow at residues 901 to 954 (GLPK…YSQP) and 969 to 1089 (AAVP…APAA). 2 stretches are compositionally biased toward gly residues: residues 916–951 (SGGG…GGGY) and 975–1079 (GRGG…GAGR). An SH3 domain is found at 1090–1147 (PAKPQVKALYDYDAQTGDELTFKEGDTIIVHQKDPAGWWEGELNGKRGWVPANYVQDI).

Belongs to the TRAFAC class myosin-kinesin ATPase superfamily. Myosin family. As to quaternary structure, myosin I heavy chain is single-headed. Dimer of a heavy and a light chain. Inability to self-assemble into filaments.

In terms of biological role, myosin is a protein that binds to F-actin and has ATPase activity that is activated by F-actin. The protein is Myosin heavy chain IB (MIB) of Acanthamoeba castellanii (Amoeba).